The primary structure comprises 185 residues: Ribosome-recycling factor (185 aa).

This sequence belongs to the RRF family.

The protein resides in the cytoplasm. In terms of biological role, responsible for the release of ribosomes from messenger RNA at the termination of protein biosynthesis. May increase the efficiency of translation by recycling ribosomes from one round of translation to another. The chain is Ribosome-recycling factor from Listeria welshimeri serovar 6b (strain ATCC 35897 / DSM 20650 / CCUG 15529 / CIP 8149 / NCTC 11857 / SLCC 5334 / V8).